The sequence spans 65 residues: Small ribosomal subunit protein bS21 (65 aa).

It belongs to the bacterial ribosomal protein bS21 family.

The sequence is that of Small ribosomal subunit protein bS21 from Thermodesulfovibrio yellowstonii (strain ATCC 51303 / DSM 11347 / YP87).